The sequence spans 143 residues: Nucleoside diphosphate kinase (143 aa).

6 residues coordinate ATP: Lys-11, Phe-59, Arg-87, Thr-93, Arg-104, and Asn-114. His-117 (pros-phosphohistidine intermediate) is an active-site residue.

Belongs to the NDK family. As to quaternary structure, homotetramer. Mg(2+) serves as cofactor.

It is found in the cytoplasm. It carries out the reaction a 2'-deoxyribonucleoside 5'-diphosphate + ATP = a 2'-deoxyribonucleoside 5'-triphosphate + ADP. The enzyme catalyses a ribonucleoside 5'-diphosphate + ATP = a ribonucleoside 5'-triphosphate + ADP. Functionally, major role in the synthesis of nucleoside triphosphates other than ATP. The ATP gamma phosphate is transferred to the NDP beta phosphate via a ping-pong mechanism, using a phosphorylated active-site intermediate. This chain is Nucleoside diphosphate kinase, found in Shewanella pealeana (strain ATCC 700345 / ANG-SQ1).